A 488-amino-acid polypeptide reads, in one-letter code: Cytochrome P450 family 716 subfamily AD polypeptide 2 (488 aa).

Residues 5–25 (LLLLSTLLILTLCCHFFYLFI) traverse the membrane as a helical segment. Residue Cys433 participates in heme binding.

This sequence belongs to the cytochrome P450 family. Heme serves as cofactor. Expressed in maturing fruits and in juice vesicles.

Its subcellular location is the membrane. The catalysed reaction is (1R,2R,3S,8R,10R,11R,15S,16S)-3-(acetyloxy)-15-[(4R)-4-[(2S)-3,3-dimethyloxiran-2-yl]-1,4-dihydroxybutan-2-yl]-2,7,7,11,16-pentamethyl-5-oxo-6-oxatetracyclo[9.7.0.0(2,8).0(12,16)]octadec-12-en-10-yl acetate + reduced [NADPH--hemoprotein reductase] + O2 = (1R,2R,3S,8R,10R,11R,15S,16S)-3-(acetyloxy)-15-(1-hydroxy-4-oxobutan-2-yl)-2,7,7,11,16-pentamethyl-5-oxo-6-oxatetracyclo[9.7.0.0(2,8).0(12,16)]octadec-12-en-10-yl acetate + 2-methylpropanoate + oxidized [NADPH--hemoprotein reductase] + H2O + 2 H(+). It functions in the pathway secondary metabolite biosynthesis; terpenoid biosynthesis. Functionally, monooxygenase involved in the biosynthesis of limonoids triterpene natural products such as limonin, a compound with insecticidal activity responsible for the bitter taste in citrus. Catalyzes the formation of (1R,2R,3S,8R,10R,11R,15S,16S)-3-(acetyloxy)-15-(1-hydroxy-4-oxobutan-2-yl)-2,7,7,11,16-pentamethyl-5-oxo-6-oxatetracyclo[9.7.0.0(2,8).0(12,16)]octadec-12-en-10-yl acetate. The sequence is that of Cytochrome P450 family 716 subfamily AD polypeptide 2 from Citrus sinensis (Sweet orange).